The primary structure comprises 267 residues: Dynein axonemal assembly factor 19 homolog (267 aa).

Disordered stretches follow at residues 86 to 111 and 226 to 250; these read ISQS…RDWR and HQGK…VDPC.

It belongs to the DNAAF19/PR46b family. Homodimer.

It is found in the cytoplasm. It localises to the cell projection. The protein resides in the cilium. Its subcellular location is the flagellum. Functionally, dynein-attachment factor required for cilia motility. The protein is Dynein axonemal assembly factor 19 homolog (PR46b) of Chlamydomonas reinhardtii (Chlamydomonas smithii).